The chain runs to 162 residues: MAAGQGGWLRPALGLRLLLATAFQAVSALGAEFSSEACRELGFSSNLLCSSCDLLGQFNLLPLDPVCRGCCQEEAQFETKKLYAGAILEVCGUKLGRFPQVQAFVRSDKPKLFRGLQIKYVRGSDPVLKLLDDNGNIAEELSILKWNTDSVEEFLSEKLERI.

Positions 1-28 are cleaved as a signal peptide; that stretch reads MAAGQGGWLRPALGLRLLLATAFQAVSA. Residue Sec93 is a non-standard amino acid, selenocysteine.

This sequence belongs to the selenoprotein M/F family. Forms a tight complex with UGGT1/UGCGL1. Interacts with UGGT2/UGCGL2. Interacts with RDH11. In terms of tissue distribution, highest levels in prostate, lower levels in brain, lung, thyroid gland, and large intestine.

It is found in the endoplasmic reticulum lumen. Functionally, may be involved in redox reactions associated with the formation of disulfide bonds. May contribute to the quality control of protein folding in the endoplasmic reticulum. May regulate protein folding by enhancing the catalytic activity of UGGT1/UGCGL1 and UGGT2/UGCGL2. In Rattus norvegicus (Rat), this protein is Selenoprotein F.